Here is a 206-residue protein sequence, read N- to C-terminus: Small ribosomal subunit protein uS4 (206 aa).

The 61-residue stretch at 93–153 folds into the S4 RNA-binding domain; the sequence is TRLDALVLRA…PKSQTMVPFQ (61 aa).

This sequence belongs to the universal ribosomal protein uS4 family. As to quaternary structure, part of the 30S ribosomal subunit. Contacts protein S5. The interaction surface between S4 and S5 is involved in control of translational fidelity.

In terms of biological role, one of the primary rRNA binding proteins, it binds directly to 16S rRNA where it nucleates assembly of the body of the 30S subunit. With S5 and S12 plays an important role in translational accuracy. The protein is Small ribosomal subunit protein uS4 of Bifidobacterium animalis subsp. lactis (strain AD011).